Here is a 708-residue protein sequence, read N- to C-terminus: Lactotransferrin (708 aa).

The first 19 residues, 1 to 19 (MKLFVPALLSLGALGLCLA), serve as a signal peptide directing secretion. 2 Transferrin-like domains span residues 25 to 352 (VRWC…NLRE) and 364 to 693 (VVWC…NLKK). Intrachain disulfides connect cysteine 28-cysteine 64 and cysteine 38-cysteine 55. Aspartate 79 is a binding site for Fe cation. Lysine 92 is an active-site residue. Tyrosine 111 serves as a coordination point for Fe cation. Disulfide bonds link cysteine 134-cysteine 217, cysteine 176-cysteine 192, cysteine 179-cysteine 202, cysteine 189-cysteine 200, and cysteine 250-cysteine 264. Hydrogencarbonate is bound by residues threonine 136, arginine 140, alanine 142, and glycine 143. Tyrosine 211 contributes to the Fe cation binding site. N-linked (GlcNAc...) (high mannose) asparagine glycosylation is present at asparagine 252. Histidine 272 lines the Fe cation pocket. Serine 278 acts as the Nucleophile in catalysis. The N-linked (GlcNAc...) (hybrid) asparagine glycan is linked to asparagine 300. 2 disulfide bridges follow: cysteine 367-cysteine 399 and cysteine 377-cysteine 390. Fe cation contacts are provided by aspartate 414 and tyrosine 452. Disulfide bonds link cysteine 424–cysteine 703, cysteine 444–cysteine 666, cysteine 476–cysteine 551, cysteine 500–cysteine 694, cysteine 510–cysteine 524, cysteine 521–cysteine 534, cysteine 592–cysteine 606, and cysteine 644–cysteine 649. Hydrogencarbonate is bound by residues threonine 478, arginine 482, alanine 484, and glycine 485. A glycan (N-linked (GlcNAc...) (complex) asparagine; alternate) is linked at asparagine 495. N-linked (GlcNAc...) (high mannose) asparagine; alternate glycosylation is present at asparagine 495. Asparagine 495 is a glycosylation site (N-linked (GlcNAc...) (hybrid) asparagine; alternate). Tyrosine 545 lines the Fe cation pocket. Asparagine 564 carries an N-linked (GlcNAc...) (high mannose) asparagine glycan. Histidine 614 contributes to the Fe cation binding site.

Belongs to the transferrin family. As to quaternary structure, monomer. Found in a complex with LTF, CLU, EPPIN and SEMG1. Found in a complex with MPO and LTF; interacts directly with CP, allows Fe(3+) incorporation into LTF and activation of CP ferroxidase activity. Poly-N-acetyllactosaminic carbohydrate moiety seems to be needed for TLR4 activation.

The protein localises to the secreted. It is found in the cytoplasmic granule. Transferrins are iron binding transport proteins which can bind two Fe(3+) ions in association with the binding of an anion, usually bicarbonate. Its function is as follows. Major iron-binding and multifunctional protein found in exocrine fluids such as breast milk and mucosal secretions. Has antimicrobial activity, which depends on the extracellular cation concentration. Antimicrobial properties include bacteriostasis, which is related to its ability to sequester free iron and thus inhibit microbial growth, as well as direct bactericidal properties leading to the release of lipopolysaccharides from the bacterial outer membrane. Can also prevent bacterial biofilm development in P.aeruginosa infection. Has weak antifungal activity against C.albicans. Has anabolic, differentiating and anti-apoptotic effects on osteoblasts and can also inhibit osteoclastogenesis, possibly playing a role in the regulation of bone growth. Promotes binding of species C adenoviruses to epithelial cells, promoting adenovirus infection. Can inhibit papillomavirus infections. Stimulates the TLR4 signaling pathway leading to NF-kappa-B activation and subsequent pro-inflammatory cytokine production while also interfering with the lipopolysaccharide (LPS)-stimulated TLR4 signaling. Inhibits neutrophil granulocyte migration to sites of apoptosis, when secreted by apoptotic cells. Stimulates VEGFA-mediated endothelial cell migration and proliferation. Binds heparin, chondroitin sulfate and possibly other glycosaminoglycans (GAGs). Also binds specifically to pneumococcal surface protein A (PspA), the lipid A portion of bacterial lipopolysaccharide (LPS), lysozyme and DNA. In terms of biological role, lactoferricin binds to the bacterial surface and is crucial for the bactericidal functions. Has some antiviral activity against papillomavirus infection. N-terminal region shows strong antifungal activity against C.albicans. Contains two BBXB heparin-binding consensus sequences that appear to form the predominate functional GAG-binding site. Functionally, the lactotransferrin transferrin-like domain 1 functions as a serine protease of the peptidase S60 family that cuts arginine rich regions. This function contributes to the antimicrobial activity. Shows a preferential cleavage at -Arg-Ser-Arg-Arg-|- and -Arg-Arg-Ser-Arg-|-, and of Z-Phe-Arg-|-aminomethylcoumarin sites. The chain is Lactotransferrin (LTF) from Bubalus bubalis (Domestic water buffalo).